We begin with the raw amino-acid sequence, 452 residues long: MALKVIKISRVSPATASVDPLIVPLSFFDLQWLKLNPTEQVFFYKLTESSSSRDVFYSSILPKLERSLSLILTHFRLFTGHLKWDSQDPKPHLVVLSGDTLSLTVAETDADFSRISGRGLRPELELRPLIPELPIYSDSGAVVSLQVTLFPKQGFCIGTTAHHVVLDGKTAEKFNKAWAHTCKHGTIPKILPTVLDRSVVNVPAGLEQKMLELLPYLTEDDKENGRTLKLPPVKEINAKDNVLRITIEISPENIEKLKERAKKESTRAELHLSTFVVTFAHVWTCMVKARSGDPNRPVRFMYAADFRNRLEPPVPVTYFGTCVLAMDFYKYKAKEFMGEDGFVNTVEILSDSVKRLASQGVESTWKVYEEGTKTMKWGTQLLVVNGSNQIGMYETDFGWGRPIHTETMSIYKNDEFSMSKRRDGIGGVEIGISLKKLEMDTFLSLFYKWIGN.

Active-site proton acceptor residues include His163 and Asp396.

The protein belongs to the plant acyltransferase family.

The enzyme catalyses 4-coumaroyl-CoA + agmatine = N-(4-guanidinobutyl)-4-hydroxycinnamamide + CoA + H(+). Its function is as follows. Involved in the biosynthesis of hydroxycinnamic acid amides, which play a role in defense against pathogens. Agmatine is the preferred acyl acceptor, lower activity is observed towards putrescine. The preferred acyl donor is p-coumaroyl-CoA, lower activity is seen towards feruloyl-CoA. The polypeptide is Agmatine coumaroyltransferase (Arabidopsis thaliana (Mouse-ear cress)).